A 99-amino-acid chain; its full sequence is Large ribosomal subunit protein uL23 (99 aa).

Belongs to the universal ribosomal protein uL23 family. Part of the 50S ribosomal subunit. Contacts protein L29, and trigger factor when it is bound to the ribosome.

Its function is as follows. One of the early assembly proteins it binds 23S rRNA. One of the proteins that surrounds the polypeptide exit tunnel on the outside of the ribosome. Forms the main docking site for trigger factor binding to the ribosome. In Alkalilimnicola ehrlichii (strain ATCC BAA-1101 / DSM 17681 / MLHE-1), this protein is Large ribosomal subunit protein uL23.